The chain runs to 277 residues: MEMO1 family protein MTH_45 (277 aa).

The protein belongs to the MEMO1 family.

The chain is MEMO1 family protein MTH_45 from Methanothermobacter thermautotrophicus (strain ATCC 29096 / DSM 1053 / JCM 10044 / NBRC 100330 / Delta H) (Methanobacterium thermoautotrophicum).